We begin with the raw amino-acid sequence, 392 residues long: Stilbene synthase 2 (392 aa).

Position 55–58 (55–58 (KFNR)) interacts with substrate. The active site involves cysteine 164. Residues leucine 267 and 305–307 (GGP) each bind substrate.

It belongs to the thiolase-like superfamily. Chalcone/stilbene synthases family. In terms of assembly, homodimer.

It localises to the cytoplasm. It carries out the reaction 4-coumaroyl-CoA + 3 malonyl-CoA + 3 H(+) = trans-resveratrol + 4 CO2 + 4 CoA. Its pathway is phytoalexin biosynthesis; 3,4',5-trihydroxystilbene biosynthesis; 3,4',5-trihydroxystilbene from trans-4-coumarate: step 2/2. Functionally, mediates resistance to pathogens which are sensitive to stilbenes. The protein is Stilbene synthase 2 of Vitis vinifera (Grape).